The primary structure comprises 493 residues: Putative lon protease homolog (493 aa).

Gly52–Ser59 lines the ATP pocket.

Belongs to the peptidase S16 family.

The protein is Putative lon protease homolog of Thermoplasma acidophilum (strain ATCC 25905 / DSM 1728 / JCM 9062 / NBRC 15155 / AMRC-C165).